The primary structure comprises 486 residues: N-succinylglutamate 5-semialdehyde dehydrogenase (486 aa).

Residue 220–225 (GSSRTG) participates in NAD(+) binding. Active-site residues include Glu243 and Cys277.

This sequence belongs to the aldehyde dehydrogenase family. AstD subfamily.

It catalyses the reaction N-succinyl-L-glutamate 5-semialdehyde + NAD(+) + H2O = N-succinyl-L-glutamate + NADH + 2 H(+). The protein operates within amino-acid degradation; L-arginine degradation via AST pathway; L-glutamate and succinate from L-arginine: step 4/5. Catalyzes the NAD-dependent reduction of succinylglutamate semialdehyde into succinylglutamate. The polypeptide is N-succinylglutamate 5-semialdehyde dehydrogenase (Shewanella sp. (strain W3-18-1)).